The primary structure comprises 362 residues: 3-isopropylmalate dehydrogenase (362 aa).

77–88 is a binding site for NAD(+); it reads GPKWGTGAVRPE. Positions 95, 105, 134, and 223 each coordinate substrate. Mg(2+) is bound by residues aspartate 223, aspartate 248, and aspartate 252. Position 287 to 298 (287 to 298) interacts with NAD(+); that stretch reads GSAPDLPKGKVN.

Belongs to the isocitrate and isopropylmalate dehydrogenases family. In terms of assembly, homodimer. The cofactor is Mg(2+). Mn(2+) is required as a cofactor.

It localises to the cytoplasm. It catalyses the reaction (2R,3S)-3-isopropylmalate + NAD(+) = 4-methyl-2-oxopentanoate + CO2 + NADH. It functions in the pathway amino-acid biosynthesis; L-leucine biosynthesis; L-leucine from 3-methyl-2-oxobutanoate: step 3/4. Its function is as follows. Catalyzes the oxidation of 3-carboxy-2-hydroxy-4-methylpentanoate (3-isopropylmalate) to 3-carboxy-4-methyl-2-oxopentanoate. The product decarboxylates to 4-methyl-2 oxopentanoate. This Zygosaccharomyces bailii protein is 3-isopropylmalate dehydrogenase (LEU2).